The chain runs to 241 residues: Nicotinamide riboside kinase (241 aa).

G21 to T29 serves as a coordination point for ATP. Mg(2+) contacts are provided by S28 and D47. The Proton acceptor role is filled by D47. Substrate contacts are provided by residues D47–Y50, W67–D68, and D68. R163 contributes to the ATP binding site. Substrate is bound at residue R164. Residues R167, R167 to G169, and D213 to Q215 each bind ATP. Residue G169 to Y170 coordinates substrate.

This sequence belongs to the uridine kinase family. NRK subfamily.

The catalysed reaction is beta-nicotinamide D-riboside + ATP = beta-nicotinamide D-ribonucleotide + ADP + H(+). It catalyses the reaction beta-D-ribosylnicotinate + ATP = nicotinate beta-D-ribonucleotide + ADP + H(+). Its pathway is cofactor biosynthesis; NAD(+) biosynthesis. Catalyzes the phosphorylation of nicotinamide riboside (NR) and nicotinic acid riboside (NaR) to form nicotinamide mononucleotide (NMN) and nicotinic acid mononucleotide (NaMN). The polypeptide is Nicotinamide riboside kinase (NRK1) (Eremothecium gossypii (strain ATCC 10895 / CBS 109.51 / FGSC 9923 / NRRL Y-1056) (Yeast)).